Reading from the N-terminus, the 744-residue chain is Palmitoyltransferase ZDHHC5-A (744 aa).

Residues 1-11 (MPSGSMSGGVS) show a composition bias toward gly residues. Residues 1 to 25 (MPSGSMSGGVSGPTSPPHPTVPSRP) form a disordered region. Topologically, residues 1 to 30 (MPSGSMSGGVSGPTSPPHPTVPSRPLRPSR) are cytoplasmic. Residues 31–51 (YVPVSAATAFLVGSTTLFFCF) form a helical membrane-spanning segment. Residues 52-61 (TCPWLSEQFS) are Extracellular-facing. A helical membrane pass occupies residues 62–82 (VAVPIYNGVMFMFVLANFCMA). Residues 83 to 167 (TFMDPGIFPR…IGRRNYRYFF (85 aa)) lie on the Cytoplasmic side of the membrane. The DHHC domain maps to 121–171 (KWCSTCRFYRPPRCSHCSVCDNCVEDFDHHCPWVNNCIGRRNYRYFFLFLL). C151 acts as the S-palmitoyl cysteine intermediate in catalysis. The helical transmembrane segment at 168 to 188 (LFLLSLTAHIMGVFGFGLLFI) threads the bilayer. Residues 189 to 208 (LYHTQQLDRVHSAVTMAVMC) are Extracellular-facing. A helical membrane pass occupies residues 209–229 (VAGLFFIPVAGLTGFHVVLVA). At 230–744 (RGRTTNEQVT…VGGTTYEISV (515 aa)) the chain is on the cytoplasmic side. Disordered stretches follow at residues 314–523 (SLEM…PVVG), 556–645 (QHAV…SLSY), and 664–744 (SVAG…EISV). A compositionally biased stretch (polar residues) spans 369–393 (TYSSPGKNHTALTHAYANQSSQQPG). Residues 398–413 (PSLDGREGGGAERSGA) show a composition bias toward basic and acidic residues. Gly residues predominate over residues 415 to 428 (RTGGGPGGPPGSGI). The segment covering 460–501 (THNAPPSEATTSTSYKSLANQTPPQAARNGSLSYDSLLTPSE) has biased composition (polar residues). Residues 571 to 584 (PERERERLLHDSQA) are compositionally biased toward basic and acidic residues. Over residues 585–601 (QHHHHHHHHHHHHRPPR) the composition is skewed to basic residues. Composition is skewed to low complexity over residues 621 to 630 (RTRSTDTTHP) and 689 to 723 (PKPS…SPAH). A compositionally biased stretch (gly residues) spans 725-737 (PGGGVKKVTGVGG).

This sequence belongs to the DHHC palmitoyltransferase family. ERF2/ZDHHC9 subfamily.

The protein resides in the cell membrane. The enzyme catalyses L-cysteinyl-[protein] + hexadecanoyl-CoA = S-hexadecanoyl-L-cysteinyl-[protein] + CoA. Its function is as follows. Palmitoyltransferase that catalyzes the addition of palmitate onto various protein substrates and is involved in a variety of cellular processes. This is Palmitoyltransferase ZDHHC5-A from Danio rerio (Zebrafish).